The chain runs to 323 residues: MKTTFLDFEQQIAELESKIEELRFVQDESSVDISDEIKTLSEKSLQLTKDIYANLTPWQVSQVARHPQRPYTLDYVGGLFTDFHELHGDRTFADDQSIIGGLARFDSQPCMVIGHQKGRDTKERALRNFGMSRPEGYRKAMRLMRLAEKFSIPVFTFVDTPGAFPGIDAEERNQSEAIGRNLYVQAELTVPIIATIIGEGGSGGALAIAMGDVVLMLQNSTYSVISPEGCASILWKTADKASEAAEQLGLTAQRIKALGLIDKIVAEPIGGAHRDYDVMMANMRKALSDSLKTFDGMKEDALLERRHERLMSYGKFKEITVKA.

In terms of domain architecture, CoA carboxyltransferase C-terminal spans 40-293; sequence LSEKSLQLTK…RKALSDSLKT (254 aa).

It belongs to the AccA family. Acetyl-CoA carboxylase is a heterohexamer composed of biotin carboxyl carrier protein (AccB), biotin carboxylase (AccC) and two subunits each of ACCase subunit alpha (AccA) and ACCase subunit beta (AccD).

The protein localises to the cytoplasm. It catalyses the reaction N(6)-carboxybiotinyl-L-lysyl-[protein] + acetyl-CoA = N(6)-biotinyl-L-lysyl-[protein] + malonyl-CoA. The protein operates within lipid metabolism; malonyl-CoA biosynthesis; malonyl-CoA from acetyl-CoA: step 1/1. Functionally, component of the acetyl coenzyme A carboxylase (ACC) complex. First, biotin carboxylase catalyzes the carboxylation of biotin on its carrier protein (BCCP) and then the CO(2) group is transferred by the carboxyltransferase to acetyl-CoA to form malonyl-CoA. The sequence is that of Acetyl-coenzyme A carboxylase carboxyl transferase subunit alpha from Polynucleobacter asymbioticus (strain DSM 18221 / CIP 109841 / QLW-P1DMWA-1) (Polynucleobacter necessarius subsp. asymbioticus).